Here is a 378-residue protein sequence, read N- to C-terminus: Ribosomal RNA large subunit methyltransferase G (378 aa).

Belongs to the methyltransferase superfamily. RlmG family.

The protein resides in the cytoplasm. It carries out the reaction guanosine(1835) in 23S rRNA + S-adenosyl-L-methionine = N(2)-methylguanosine(1835) in 23S rRNA + S-adenosyl-L-homocysteine + H(+). Its function is as follows. Specifically methylates the guanine in position 1835 (m2G1835) of 23S rRNA. The sequence is that of Ribosomal RNA large subunit methyltransferase G from Shigella boydii serotype 18 (strain CDC 3083-94 / BS512).